Consider the following 172-residue polypeptide: S-ribosylhomocysteine lyase (172 aa).

Residues His54, His58, and Cys128 each coordinate Fe cation.

Belongs to the LuxS family. Homodimer. Fe cation is required as a cofactor.

The enzyme catalyses S-(5-deoxy-D-ribos-5-yl)-L-homocysteine = (S)-4,5-dihydroxypentane-2,3-dione + L-homocysteine. Functionally, involved in the synthesis of autoinducer 2 (AI-2) which is secreted by bacteria and is used to communicate both the cell density and the metabolic potential of the environment. The regulation of gene expression in response to changes in cell density is called quorum sensing. Catalyzes the transformation of S-ribosylhomocysteine (RHC) to homocysteine (HC) and 4,5-dihydroxy-2,3-pentadione (DPD). The protein is S-ribosylhomocysteine lyase of Vibrio cholerae serotype O1 (strain ATCC 39541 / Classical Ogawa 395 / O395).